Here is a 115-residue protein sequence, read N- to C-terminus: U3-lycotoxin-Ls1d (115 aa).

A signal peptide spans 1-20 (MKFVLLFGVLLVTLFSYSSA). A propeptide spanning residues 21–44 (EMLDDFDQADEDELLSLIEKEEAR) is cleaved from the precursor. 4 cysteine pairs are disulfide-bonded: Cys-48–Cys-63, Cys-55–Cys-72, Cys-62–Cys-87, and Cys-74–Cys-85.

It belongs to the neurotoxin 19 (CSTX) family. 01 subfamily. As to expression, expressed by the venom gland.

The protein localises to the secreted. This is U3-lycotoxin-Ls1d from Lycosa singoriensis (Wolf spider).